A 283-amino-acid polypeptide reads, in one-letter code: Phosphatidylglycerol--prolipoprotein diacylglyceryl transferase (283 aa).

4 consecutive transmembrane segments (helical) span residues 17–37, 56–76, 92–112, and 117–137; these read LAVRWYALSYILGFILFTFLG, FLTWGILGVILGGRLGYVLFY, WEGGMSFHGGFLGVVIAIWLF, and GIGFLKLMDTVAPLVPLGLAS. Residue Arg139 participates in a 1,2-diacyl-sn-glycero-3-phospho-(1'-sn-glycerol) binding. 3 helical membrane-spanning segments follow: residues 194 to 214, 222 to 242, and 255 to 275; these read PSQLYQFALEGICLFAVVWLF, GQVASLFLGGYGIFRFIAEFA, and GLSMGQWLSVPMIVLGIVGFV.

Belongs to the Lgt family.

Its subcellular location is the cell inner membrane. The catalysed reaction is L-cysteinyl-[prolipoprotein] + a 1,2-diacyl-sn-glycero-3-phospho-(1'-sn-glycerol) = an S-1,2-diacyl-sn-glyceryl-L-cysteinyl-[prolipoprotein] + sn-glycerol 1-phosphate + H(+). Its pathway is protein modification; lipoprotein biosynthesis (diacylglyceryl transfer). Its function is as follows. Catalyzes the transfer of the diacylglyceryl group from phosphatidylglycerol to the sulfhydryl group of the N-terminal cysteine of a prolipoprotein, the first step in the formation of mature lipoproteins. The chain is Phosphatidylglycerol--prolipoprotein diacylglyceryl transferase from Neisseria meningitidis serogroup A / serotype 4A (strain DSM 15465 / Z2491).